Consider the following 1182-residue polypeptide: MGQQVGRVGEAPGLQQPQPRGIRGSSAARPSGRRRDPAGRTADAGFNVFTQHDHFASCVEDGFEGDKTGGSSPEVLHRPFGCDAESQALNEAIRWSSKENLLGATESDPNLFVALYDFVASGDNTLSITKGEKLRVLGYNQNGEWSEVRSKNGQGWVPSNYITPVNSLEKHSWYHGPVSRSAAEYLLSSLINGSFLVRESESSPGQLSISLRYEGRVYHYRINTTTDSKVYVTAESRFSTLAELVHHHSTVADGLVTTLHYPAPKCNKPTVYGVSPIHDKWEMERTDITMKHKLGGGQYGEVYVGVWKKYSLTVAVKTFKEDTMEVEEFLKEAAVMKEIKHPNLVQLLGVCTLEPPFYIVTEYMPYGNLLDYLRECSREEVTAVVLLYMATQISSAMEYLEKKNFIHRDLAARNCLVGENHVVKVADFGLSRLMTGDTYTAHAGAKFPIKWTAPESLAYNTFSIKSDVWAFGVLLWEIATYGMSPYPGIDLSQVYDLLEKGYRMEQPEGCPPKVYELMRACWKWSPADRPSFAETHQAFETMFHDSSISEEVAEELGRTASSSSVVPYLPRLPLLPSKTRTLRKQGENKENLDGGLDAAESLASSSAPAGFIRSTQASSGSPALPRKQRDKSPSSLLEDAKETCFTRDRKGGFFSSFMKKRNAPTPPKRSSSFREMENQPHKKYELTGNFSPVASLQNADGFSVAPSQQEPNLVPAKCYGGSFAQRNLCADDDSGGGGGSGTAGGGWSGITGFFTPRLIKKTLGLRAGKPTASDDTSKPFPRSNSTSSMSSGLPEQDRMAMTLPRNCQRSKLQLERTVSTSSQPEENVDRANDMLPKKSEEGAAPARERPKAKLLPRGATALPLRAPDPAITESDSPGVGVAGVAAAPKGKERNGGTRLGVAGVPEDGEQLGWSSPAKAVAVLPTTHNHKVPVLISPTLKHTPADVQLIGTDSQGNKFKLLSEHQVTSSGDKDRPRRVKPKCAPPPPPVMRLLQHPSTCSDPEEEPTAPPAGQHTPETQEGGKKAAPGPVPSSGKPGRPVMPPPQVPLPTSSISPAKMANGTAGTKVALRKTKQAAEKISADKISKEALLECADLLSSAITEPVPNSQLVDTGHQLLDYCSGYVDSIPQTRNKFAFREAVSKLELSLQELQVSSTAAGVPGTNPVLNNLLSCVQEISDVVQR.

The disordered stretch occupies residues 1 to 42; the sequence is MGQQVGRVGEAPGLQQPQPRGIRGSSAARPSGRRRDPAGRTA. A lipid anchor (N-myristoyl glycine) is attached at Gly-2. Residues 2-106 form a CAP region; it reads GQQVGRVGEA…SKENLLGATE (105 aa). Low complexity predominate over residues 20-30; the sequence is RGIRGSSAARP. Phosphoserine is present on Ser-97. Residues 107–167 enclose the SH3 domain; the sequence is SDPNLFVALY…PSNYITPVNS (61 aa). Tyr-116, Tyr-161, Tyr-174, Tyr-185, Tyr-218, and Tyr-231 each carry phosphotyrosine. In terms of domain architecture, SH2 spans 173-263; sequence WYHGPVSRSA…GLVTTLHYPA (91 aa). At Tyr-261 the chain carries Phosphotyrosine; by ABL1 and autocatalysis. Position 272 is a phosphotyrosine; by autocatalysis (Tyr-272). A Phosphoserine modification is found at Ser-275. In terms of domain architecture, Protein kinase spans 288 to 539; the sequence is ITMKHKLGGG…PSFAETHQAF (252 aa). ATP is bound at residue 294 to 302; that stretch reads LGGGQYGEV. Phosphotyrosine occurs at positions 299 and 303. ATP-binding positions include Lys-317 and 362–368; that span reads EYMPYGN. Residue Asp-409 is the Proton acceptor of the active site. The Kinase activation loop motif lies at 427–451; it reads DFGLSRLMTGDTYTAHAGAKFPIKW. Tyr-439 bears the Phosphotyrosine; by autocatalysis and SRC-type Tyr-kinases mark. Tyr-459 bears the Phosphotyrosine mark. Residue Tyr-568 is modified to Phosphotyrosine; by autocatalysis. Phosphoserine occurs at positions 606, 621, 632, 634, and 656. Disordered stretches follow at residues 612–642 and 655–674; these read IRST…DAKE and SSFM…SSFR. Positions 659–661 match the Nuclear localization signal motif; the sequence is KKR. Residues Ser-670, Ser-671, and Ser-672 each carry the phosphoserine modification. Residue Tyr-684 is modified to Phosphotyrosine; by autocatalysis. Residues 695–930 are F-actin-binding; sequence SLQNADGFSV…AVLPTTHNHK (236 aa). The residue at position 719 (Tyr-719) is a Phosphotyrosine. Positions 765 to 796 are disordered; the sequence is LRAGKPTASDDTSKPFPRSNSTSSMSSGLPEQ. Lys-778 is modified (N6-acetyllysine). The segment covering 782–793 has biased composition (polar residues); that stretch reads RSNSTSSMSSGL. The residue at position 785 (Ser-785) is a Phosphoserine. Thr-802 is subject to Phosphothreonine. The segment covering 809–825 has biased composition (polar residues); that stretch reads RSKLQLERTVSTSSQPE. Residues 809–858 are disordered; that stretch reads RSKLQLERTVSTSSQPEENVDRANDMLPKKSEEGAAPARERPKAKLLPRG. Residues Ser-819 and Ser-822 each carry the phosphoserine modification. The segment covering 827–851 has biased composition (basic and acidic residues); that stretch reads NVDRANDMLPKKSEEGAAPARERPK. Phosphoserine occurs at positions 915 and 936. Residues 964-1059 form a disordered region; that stretch reads HQVTSSGDKD…TSSISPAKMA (96 aa). Residues 1020–1182 are F-actin-binding; it reads EGGKKAAPGP…VQEISDVVQR (163 aa).

It belongs to the protein kinase superfamily. Tyr protein kinase family. ABL subfamily. In terms of assembly, interacts with PSMA7. Interacts with CTTN. Found in a complex with ABL1, ABL2, CRK and UNC119; leading to the inhibition of CRK phosphorylation by ABL kinases. Mg(2+) is required as a cofactor. The cofactor is Mn(2+). Phosphorylated at Tyr-261 by ABL1 in response to oxidative stress. Phosphorylated by PDGFRB. Post-translationally, polyubiquitinated. Polyubiquitination of ABL2 leads to degradation. As to expression, most abundant in adult mouse brain, especially in synapse-rich regions.

The protein localises to the cytoplasm. The protein resides in the cytoskeleton. The enzyme catalyses L-tyrosyl-[protein] + ATP = O-phospho-L-tyrosyl-[protein] + ADP + H(+). Stabilized in the inactive form by an association between the SH3 domain and the SH2-TK linker region, interactions of the N-terminal cap, and contributions from an N-terminal myristoyl group and phospholipids. Activated by autophosphorylation as well as by SRC-family kinase-mediated phosphorylation. Activated by RIN1 binding to the SH2 and SH3 domains. Inhibited by imatinib mesylate (Gleevec). Phosphatidylinositol 4,5-bisphosphate (PIP2), a highly abundant phosphoinositide known to regulate cytoskeletal and membrane proteins, inhibits the tyrosine kinase activity. Its function is as follows. Non-receptor tyrosine-protein kinase that plays an ABL1-overlapping role in key processes linked to cell growth and survival such as cytoskeleton remodeling in response to extracellular stimuli, cell motility and adhesion, receptor endocytosis, autophagy, DNA damage response and apoptosis. Coordinates actin remodeling through tyrosine phosphorylation of proteins controlling cytoskeleton dynamics like MYH10 (involved in movement); CTTN (involved in signaling); or TUBA1 and TUBB (microtubule subunits). Binds directly F-actin and regulates actin cytoskeletal structure through its F-actin-bundling activity. Involved in the regulation of cell adhesion and motility through phosphorylation of key regulators of these processes such as CRK, CRKL or DOK1. Required for adhesion-dependent phosphorylation of ARHGAP35 which promotes its association with RASA1, resulting in recruitment of ARHGAP35 to the cell periphery where it inhibits RHO. Phosphorylates multiple receptor tyrosine kinases like PDGFRB and other substrates which are involved in endocytosis regulation such as RIN1. In brain, may regulate neurotransmission by phosphorylating proteins at the synapse. Finally, functions as its own regulator through autocatalytic activity as well as through phosphorylation of its inhibitor, ABI1. Positively regulates chemokine-mediated T-cell migration, polarization, and homing to lymph nodes and immune-challenged tissues, potentially via activation of NEDD9/HEF1 and RAP1. This is Tyrosine-protein kinase ABL2 from Mus musculus (Mouse).